Reading from the N-terminus, the 131-residue chain is Small ribosomal subunit protein bS6 (131 aa).

The interval 96-131 (VTEASPMAKAKDERDSRRGPAGDRSYDEANAEEIAE) is disordered. Residues 104–122 (KAKDERDSRRGPAGDRSYD) show a composition bias toward basic and acidic residues.

Belongs to the bacterial ribosomal protein bS6 family.

In terms of biological role, binds together with bS18 to 16S ribosomal RNA. The polypeptide is Small ribosomal subunit protein bS6 (Shewanella sp. (strain MR-4)).